We begin with the raw amino-acid sequence, 337 residues long: Glyceraldehyde-3-phosphate dehydrogenase (337 aa).

Residues 12 to 13, Asp-34, and Lys-79 contribute to the NAD(+) site; that span reads RI. D-glyceraldehyde 3-phosphate is bound by residues 150–152, Thr-181, 210–211, and Arg-233; these read SCT and TG. Cys-151 acts as the Nucleophile in catalysis. Position 315 (Asn-315) interacts with NAD(+).

Belongs to the glyceraldehyde-3-phosphate dehydrogenase family. In terms of assembly, homotetramer.

It is found in the cytoplasm. The enzyme catalyses D-glyceraldehyde 3-phosphate + phosphate + NAD(+) = (2R)-3-phospho-glyceroyl phosphate + NADH + H(+). The protein operates within carbohydrate degradation; glycolysis; pyruvate from D-glyceraldehyde 3-phosphate: step 1/5. The sequence is that of Glyceraldehyde-3-phosphate dehydrogenase (GPD) from Phanerodontia chrysosporium (White-rot fungus).